Reading from the N-terminus, the 436-residue chain is Anaerobic glycerol-3-phosphate dehydrogenase subunit B (436 aa).

This sequence belongs to the anaerobic G-3-P dehydrogenase subunit B family. As to quaternary structure, composed of a catalytic GlpA/B dimer and of membrane bound GlpC. The cofactor is FMN.

The enzyme catalyses a quinone + sn-glycerol 3-phosphate = dihydroxyacetone phosphate + a quinol. It functions in the pathway polyol metabolism; glycerol degradation via glycerol kinase pathway; glycerone phosphate from sn-glycerol 3-phosphate (anaerobic route): step 1/1. Functionally, conversion of glycerol 3-phosphate to dihydroxyacetone. Uses fumarate or nitrate as electron acceptor. This Vibrio cholerae serotype O1 (strain ATCC 39315 / El Tor Inaba N16961) protein is Anaerobic glycerol-3-phosphate dehydrogenase subunit B.